The chain runs to 387 residues: Protein NDRG3 (387 aa).

The segment at 329–387 (PSASMTRLVRSRTHSASSSGSMEMPRSRSHTSNAQLQSTSNNSLSNQIQETPHTIELSC) is disordered. The segment covering 359 to 377 (TSNAQLQSTSNNSLSNQIQ) has biased composition (low complexity).

This sequence belongs to the NDRG family.

In Xenopus tropicalis (Western clawed frog), this protein is Protein NDRG3.